Here is a 69-residue protein sequence, read N- to C-terminus: Cecropin-like peptide 1 (69 aa).

The signal sequence occupies residues 1–23; the sequence is MNFTKLFVVFAVVLVAFAGQSEA. The residue at position 68 (glutamine 68) is a Glutamine amide.

Following bacterial infection, expressed in fat body, trachea and muscle.

It is found in the secreted. In terms of biological role, antimicrobial peptide active against Gram-negative bacteria E.coli KCCM 11234 (MIC&lt;=1.03 uM), E.aerogenes KCCM 12177 (MIC&lt;=2.07 uM) and P.aeruginosa KCCM 11328 (MIC&lt;=2.07 uM). Not active against various Gram-positive bacteria at concentrations up to 4.14 uM. This Hermetia illucens (Black soldier fly) protein is Cecropin-like peptide 1.